Reading from the N-terminus, the 108-residue chain is Urease subunit beta (108 aa).

It belongs to the urease beta subunit family. As to quaternary structure, heterotrimer of UreA (gamma), UreB (beta) and UreC (alpha) subunits. Three heterotrimers associate to form the active enzyme.

Its subcellular location is the cytoplasm. The catalysed reaction is urea + 2 H2O + H(+) = hydrogencarbonate + 2 NH4(+). It functions in the pathway nitrogen metabolism; urea degradation; CO(2) and NH(3) from urea (urease route): step 1/1. The polypeptide is Urease subunit beta (Microcystis aeruginosa (strain NIES-843 / IAM M-2473)).